Here is a 340-residue protein sequence, read N- to C-terminus: Heat-inducible transcription repressor HrcA (340 aa).

This sequence belongs to the HrcA family.

Its function is as follows. Negative regulator of class I heat shock genes (grpE-dnaK-dnaJ and groELS operons). Prevents heat-shock induction of these operons. The polypeptide is Heat-inducible transcription repressor HrcA (Burkholderia mallei (strain NCTC 10247)).